A 284-amino-acid polypeptide reads, in one-letter code: Formamidopyrimidine-DNA glycosylase (284 aa).

Catalysis depends on Pro-2, which acts as the Schiff-base intermediate with DNA. Glu-3 acts as the Proton donor in catalysis. Residue Lys-61 is the Proton donor; for beta-elimination activity of the active site. DNA contacts are provided by His-95, Arg-114, and Arg-159. The FPG-type zinc-finger motif lies at 244–278 (WVYGRKGQPCRVCNTPIERIRLAGRSTHFCPTCQR). The active-site Proton donor; for delta-elimination activity is Arg-268.

Belongs to the FPG family. In terms of assembly, monomer. Requires Zn(2+) as cofactor.

It catalyses the reaction Hydrolysis of DNA containing ring-opened 7-methylguanine residues, releasing 2,6-diamino-4-hydroxy-5-(N-methyl)formamidopyrimidine.. It carries out the reaction 2'-deoxyribonucleotide-(2'-deoxyribose 5'-phosphate)-2'-deoxyribonucleotide-DNA = a 3'-end 2'-deoxyribonucleotide-(2,3-dehydro-2,3-deoxyribose 5'-phosphate)-DNA + a 5'-end 5'-phospho-2'-deoxyribonucleoside-DNA + H(+). Its function is as follows. Involved in base excision repair of DNA damaged by oxidation or by mutagenic agents. Acts as a DNA glycosylase that recognizes and removes damaged bases. Has a preference for oxidized purines, such as 7,8-dihydro-8-oxoguanine (8-oxoG). Has AP (apurinic/apyrimidinic) lyase activity and introduces nicks in the DNA strand. Cleaves the DNA backbone by beta-delta elimination to generate a single-strand break at the site of the removed base with both 3'- and 5'-phosphates. The chain is Formamidopyrimidine-DNA glycosylase from Gloeobacter violaceus (strain ATCC 29082 / PCC 7421).